Reading from the N-terminus, the 843-residue chain is Pentatricopeptide repeat-containing protein At4g21880, mitochondrial (843 aa).

7 PPR repeats span residues 392–426 (SSTS…GLVI), 427–461 (SANI…SVKP), 462–496 (NSET…NLAP), 497–531 (NSSM…DVKP), 532–562 (DSVT…AGVE), 564–594 (NKHV…LEVP), and 598–632 (HNEL…RCPV).

It belongs to the PPR family. P subfamily.

It localises to the mitochondrion. This Arabidopsis thaliana (Mouse-ear cress) protein is Pentatricopeptide repeat-containing protein At4g21880, mitochondrial.